A 121-amino-acid chain; its full sequence is Large ribosomal subunit protein bL12 (121 aa).

It belongs to the bacterial ribosomal protein bL12 family. Homodimer. Part of the ribosomal stalk of the 50S ribosomal subunit. Forms a multimeric L10(L12)X complex, where L10 forms an elongated spine to which 2 to 4 L12 dimers bind in a sequential fashion. Binds GTP-bound translation factors.

Its function is as follows. Forms part of the ribosomal stalk which helps the ribosome interact with GTP-bound translation factors. Is thus essential for accurate translation. This Pectobacterium atrosepticum (strain SCRI 1043 / ATCC BAA-672) (Erwinia carotovora subsp. atroseptica) protein is Large ribosomal subunit protein bL12.